Here is a 437-residue protein sequence, read N- to C-terminus: Alpha-galactosidase 3 (437 aa).

The first 30 residues, 1–30 (MVIMKKMKDSVLFLVVGLFSLSVLVSQSIA), serve as a signal peptide directing secretion. Cystine bridges form between Cys85/Cys117 and Cys165/Cys195. N-linked (GlcNAc...) asparagine glycosylation occurs at Asn88. Substrate contacts are provided by residues 115–116 (DD) and Lys191. The Nucleophile role is filled by Asp193. A glycan (N-linked (GlcNAc...) asparagine) is linked at Asn214. Substrate-binding positions include 226-230 (EWGVD), Arg244, and Asp248. Asp248 serves as the catalytic Proton donor. N-linked (GlcNAc...) asparagine glycans are attached at residues Asn250, Asn315, and Asn408.

The protein belongs to the glycosyl hydrolase 27 family. Homodimer.

The protein localises to the secreted. It localises to the cell wall. It is found in the extracellular space. Its subcellular location is the apoplast. The protein resides in the vacuole. It catalyses the reaction Hydrolysis of terminal, non-reducing alpha-D-galactose residues in alpha-D-galactosides, including galactose oligosaccharides, galactomannans and galactolipids.. In terms of biological role, may regulate leaf (and possibly other organ) development by functioning in cell wall loosening and cell wall expansion. The polypeptide is Alpha-galactosidase 3 (Arabidopsis thaliana (Mouse-ear cress)).